The primary structure comprises 131 residues: Peptidyl-prolyl cis-trans isomerase NIMA-interacting 4 (131 aa).

The tract at residues 1–25 (MPPKGKSGSGKGGKGKAASGSESSE) is necessary for nuclear localization and DNA-binding. The interval 1–37 (MPPKGKSGSGKGGKGKAASGSESSEKKAQGPKGGGNA) is disordered. The segment at 1–41 (MPPKGKSGSGKGGKGKAASGSESSEKKAQGPKGGGNAVKVR) is necessary for association with the pre-rRNP complexes. Ser19 is subject to Phosphoserine; by CK2. The PpiC domain maps to 35–129 (GNAVKVRHIL…FGYHIIMVEG (95 aa)).

The protein belongs to the PpiC/parvulin rotamase family. PIN4 subfamily. Found in pre-ribosomal ribonucleoprotein (pre-rRNP) complexes. Phosphorylated. Phosphorylation occurs both in the nucleus and the cytoplasm. Phosphorylation at Ser-19 does not affect its PPIase activity but is required for nuclear localization, and the dephosphorylation is a prerequisite for the binding to DNA. The unphosphorylated form associates with the pre-rRNP complexes in the nucleus.

Its subcellular location is the nucleus. The protein resides in the nucleolus. It localises to the cytoplasm. It is found in the cytoskeleton. The protein localises to the spindle. It catalyses the reaction [protein]-peptidylproline (omega=180) = [protein]-peptidylproline (omega=0). In terms of biological role, involved as a ribosomal RNA processing factor in ribosome biogenesis. Binds to tightly bent AT-rich stretches of double-stranded DNA. The sequence is that of Peptidyl-prolyl cis-trans isomerase NIMA-interacting 4 (PIN4) from Bos taurus (Bovine).